We begin with the raw amino-acid sequence, 729 residues long: Polyribonucleotide nucleotidyltransferase (729 aa).

Residues Asp516 and Asp522 each contribute to the Mg(2+) site. The KH domain occupies 581–641 (PSTEHFSINP…EKVAAAKEHI (61 aa)). Positions 658 to 725 (GKTYVGKVKK…KGKKVELATP (68 aa)) constitute an S1 motif domain.

Belongs to the polyribonucleotide nucleotidyltransferase family. The cofactor is Mg(2+).

It localises to the cytoplasm. It catalyses the reaction RNA(n+1) + phosphate = RNA(n) + a ribonucleoside 5'-diphosphate. In terms of biological role, involved in mRNA degradation. Catalyzes the phosphorolysis of single-stranded polyribonucleotides processively in the 3'- to 5'-direction. The sequence is that of Polyribonucleotide nucleotidyltransferase from Sulfurovum sp. (strain NBC37-1).